A 227-amino-acid chain; its full sequence is Ion-translocating oxidoreductase complex subunit E (227 aa).

The next 5 helical transmembrane spans lie at 57-77, 89-109, 111-131, 146-166, and 200-220; these read LGLG…ISLF, IYVM…NAFA, PVYQ…IVIG, AFDG…LGAI, and GLLL…ILAV.

Belongs to the NqrDE/RnfAE family. As to quaternary structure, the complex is composed of six subunits: RnfA, RnfB, RnfC, RnfD, RnfE and RnfG.

It is found in the cell inner membrane. Part of a membrane-bound complex that couples electron transfer with translocation of ions across the membrane. The polypeptide is Ion-translocating oxidoreductase complex subunit E (Haemophilus ducreyi (strain 35000HP / ATCC 700724)).